The following is a 64-amino-acid chain: Large ribosomal subunit protein bL33 (64 aa).

It belongs to the bacterial ribosomal protein bL33 family.

The sequence is that of Large ribosomal subunit protein bL33 from Parasynechococcus marenigrum (strain WH8102).